A 156-amino-acid polypeptide reads, in one-letter code: Small ribosomal subunit protein uS7 (156 aa).

This sequence belongs to the universal ribosomal protein uS7 family. In terms of assembly, part of the 30S ribosomal subunit. Contacts proteins S9 and S11.

In terms of biological role, one of the primary rRNA binding proteins, it binds directly to 16S rRNA where it nucleates assembly of the head domain of the 30S subunit. Is located at the subunit interface close to the decoding center, probably blocks exit of the E-site tRNA. The polypeptide is Small ribosomal subunit protein uS7 (Erwinia tasmaniensis (strain DSM 17950 / CFBP 7177 / CIP 109463 / NCPPB 4357 / Et1/99)).